The following is a 229-amino-acid chain: uncharacterized protein (229 aa).

Residues 102-217 (RRRTVRVEPD…REKVRRYVFE (116 aa)) enclose the PilZ domain.

This sequence to A.aeolicus aq_820 and aq_1211.

This is an uncharacterized protein from Aquifex aeolicus (strain VF5).